The chain runs to 335 residues: N-acetyl-gamma-glutamyl-phosphate reductase (335 aa).

The active site involves C147.

Belongs to the NAGSA dehydrogenase family. Type 1 subfamily.

Its subcellular location is the cytoplasm. The enzyme catalyses N-acetyl-L-glutamate 5-semialdehyde + phosphate + NADP(+) = N-acetyl-L-glutamyl 5-phosphate + NADPH + H(+). The protein operates within amino-acid biosynthesis; L-arginine biosynthesis; N(2)-acetyl-L-ornithine from L-glutamate: step 3/4. Functionally, catalyzes the NADPH-dependent reduction of N-acetyl-5-glutamyl phosphate to yield N-acetyl-L-glutamate 5-semialdehyde. This is N-acetyl-gamma-glutamyl-phosphate reductase from Campylobacter hominis (strain ATCC BAA-381 / DSM 21671 / CCUG 45161 / LMG 19568 / NCTC 13146 / CH001A).